We begin with the raw amino-acid sequence, 360 residues long: Phospho-N-acetylmuramoyl-pentapeptide-transferase (360 aa).

The next 10 helical transmembrane spans lie at 25–45 (RGIL…PWMI), 73–93 (TMGG…WADL), 97–117 (YVWV…VDDY), 142–162 (IGAA…TLIV), 167–187 (SVEI…IVGS), 199–219 (GLAI…CYLS), 236–256 (AGEL…FLWF), 263–283 (VFMG…IAVI), 288–308 (IVLF…MIQV), and 338–358 (VIVR…ATLK).

This sequence belongs to the glycosyltransferase 4 family. MraY subfamily. Requires Mg(2+) as cofactor.

It localises to the cell inner membrane. The catalysed reaction is UDP-N-acetyl-alpha-D-muramoyl-L-alanyl-gamma-D-glutamyl-meso-2,6-diaminopimeloyl-D-alanyl-D-alanine + di-trans,octa-cis-undecaprenyl phosphate = di-trans,octa-cis-undecaprenyl diphospho-N-acetyl-alpha-D-muramoyl-L-alanyl-D-glutamyl-meso-2,6-diaminopimeloyl-D-alanyl-D-alanine + UMP. The protein operates within cell wall biogenesis; peptidoglycan biosynthesis. Catalyzes the initial step of the lipid cycle reactions in the biosynthesis of the cell wall peptidoglycan: transfers peptidoglycan precursor phospho-MurNAc-pentapeptide from UDP-MurNAc-pentapeptide onto the lipid carrier undecaprenyl phosphate, yielding undecaprenyl-pyrophosphoryl-MurNAc-pentapeptide, known as lipid I. The chain is Phospho-N-acetylmuramoyl-pentapeptide-transferase from Pseudomonas aeruginosa (strain LESB58).